The primary structure comprises 347 residues: DNA damage tolerance protein RHC31 (347 aa).

Ser-9 carries the phosphoserine modification. A Glycyl lysine isopeptide (Lys-Gly) (interchain with G-Cter in SUMO) cross-link involves residue Lys-35.

Could be involved in a ubiquitin-related process important for DNA damage tolerance. This Saccharomyces cerevisiae (strain ATCC 204508 / S288c) (Baker's yeast) protein is DNA damage tolerance protein RHC31 (AOS1).